The chain runs to 185 residues: Large ribosomal subunit protein uL22 (185 aa).

The protein belongs to the universal ribosomal protein uL22 family. Component of the large ribosomal subunit. Mature ribosomes consist of a small (40S) and a large (60S) subunit. The 40S subunit contains about 32 different proteins and 1 molecule of RNA (18S). The 60S subunit contains 45 different proteins and 3 molecules of RNA (25S, 5.8S and 5S).

It localises to the cytoplasm. In terms of biological role, component of the ribosome, a large ribonucleoprotein complex responsible for the synthesis of proteins in the cell. The small ribosomal subunit (SSU) binds messenger RNAs (mRNAs) and translates the encoded message by selecting cognate aminoacyl-transfer RNA (tRNA) molecules. The large subunit (LSU) contains the ribosomal catalytic site termed the peptidyl transferase center (PTC), which catalyzes the formation of peptide bonds, thereby polymerizing the amino acids delivered by tRNAs into a polypeptide chain. The nascent polypeptides leave the ribosome through a tunnel in the LSU and interact with protein factors that function in enzymatic processing, targeting, and the membrane insertion of nascent chains at the exit of the ribosomal tunnel. This Candida albicans (strain SC5314 / ATCC MYA-2876) (Yeast) protein is Large ribosomal subunit protein uL22.